The sequence spans 186 residues: Transcriptional repressor NrdR (186 aa).

A zinc finger lies at 3–34; it reads CPFCRHPDSRVVDSREAEEGAAIRRRRSCPAC. The region spanning 46–136 is the ATP-cone domain; the sequence is LRVRKRSGAT…VYLAFESLGD (91 aa). The tract at residues 149-169 is disordered; it reads AGGGEPPVAGKPTTMPAATGA.

It belongs to the NrdR family. The cofactor is Zn(2+).

Its function is as follows. Negatively regulates transcription of bacterial ribonucleotide reductase nrd genes and operons by binding to NrdR-boxes. This chain is Transcriptional repressor NrdR, found in Parafrankia sp. (strain EAN1pec).